We begin with the raw amino-acid sequence, 237 residues long: Protein XpsM (237 aa).

Positions 1-21 (MPAATWTASPSPPNWPVPMPR) are disordered. A compositionally biased stretch (pro residues) spans 10–21 (PSPPNWPVPMPR).

The sequence is that of Protein XpsM (xpsM) from Xanthomonas campestris pv. campestris (strain ATCC 33913 / DSM 3586 / NCPPB 528 / LMG 568 / P 25).